Consider the following 223-residue polypeptide: Acetate CoA-transferase subunit beta (223 aa).

Glu46 is a catalytic residue.

The protein belongs to the 3-oxoacid CoA-transferase subunit B family. As to quaternary structure, heterotetramer composed of two alpha subunits (AtoD) and two beta subunits (AtoA).

It catalyses the reaction an acyl-CoA + acetate = a carboxylate + acetyl-CoA. It carries out the reaction acetoacetate + acetyl-CoA = acetoacetyl-CoA + acetate. It participates in lipid metabolism; short-chain fatty acid metabolism. In terms of biological role, coenzyme A transferase which is involved in short-chain fatty acid degradation and catalyzes the activation of short-chain fatty acids to their respective CoA thiolesters. This Haemophilus influenzae (strain ATCC 51907 / DSM 11121 / KW20 / Rd) protein is Acetate CoA-transferase subunit beta (atoA).